A 162-amino-acid polypeptide reads, in one-letter code: ATP synthase subunit delta, mitochondrial (162 aa).

A mitochondrion-targeting transit peptide spans 1–25; sequence MSSLRLLASAARRATTHVAYTRRGY.

This sequence belongs to the ATPase epsilon chain family. F-type ATPases have 2 components, CF(1) - the catalytic core - and CF(0) - the membrane proton channel. CF(1) has five subunits: alpha(3), beta(3), gamma(1), delta(1), epsilon(1). CF(0) has three main subunits: a, b and c.

It localises to the mitochondrion. It is found in the mitochondrion inner membrane. Its function is as follows. Mitochondrial membrane ATP synthase (F(1)F(0) ATP synthase or Complex V) produces ATP from ADP in the presence of a proton gradient across the membrane which is generated by electron transport complexes of the respiratory chain. F-type ATPases consist of two structural domains, F(1) - containing the extramembraneous catalytic core, and F(0) - containing the membrane proton channel, linked together by a central stalk and a peripheral stalk. During catalysis, ATP turnover in the catalytic domain of F(1) is coupled via a rotary mechanism of the central stalk subunits to proton translocation. Part of the complex F(1) domain and of the central stalk which is part of the complex rotary element. Rotation of the central stalk against the surrounding alpha(3)beta(3) subunits leads to hydrolysis of ATP in three separate catalytic sites on the beta subunits. This chain is ATP synthase subunit delta, mitochondrial (atpD), found in Agaricus bisporus (White button mushroom).